The chain runs to 198 residues: Ribosome maturation factor RimP (198 aa).

Belongs to the RimP family.

The protein localises to the cytoplasm. Its function is as follows. Required for maturation of 30S ribosomal subunits. In Agrobacterium fabrum (strain C58 / ATCC 33970) (Agrobacterium tumefaciens (strain C58)), this protein is Ribosome maturation factor RimP.